Consider the following 1029-residue polypeptide: Chitin synthase 3 (1029 aa).

Positions 1-29 (MAYYSRPASAGAARAQDDQDPYPYYPDPD) are disordered. N-linked (GlcNAc...) asparagine glycosylation occurs at asparagine 37. A compositionally biased stretch (low complexity) spans 46–71 (ASGAASSASHTSPFSDAHAASASPAS). 2 disordered regions span residues 46–105 (ASGA…SRMP) and 168–209 (LAHR…AGTS). Over residues 76–91 (SHQQVSAHAPQQQHMS) the composition is skewed to polar residues. Positions 191-202 (AHDEKYAYDRPD) are enriched in basic and acidic residues. 4 N-linked (GlcNAc...) asparagine glycosylation sites follow: asparagine 401, asparagine 514, asparagine 527, and asparagine 689. Transmembrane regions (helical) follow at residues 723 to 743 (FYSF…YIFF), 760 to 780 (IGVF…SSFI), 796 to 816 (AAVV…VLCL), 830 to 850 (AQMV…SLLA), 860 to 880 (FLQY…YAFC), 963 to 983 (VVLA…NGDA), and 998 to 1018 (VYMV…FIGS).

Belongs to the chitin synthase family. Class I subfamily.

It is found in the cell membrane. It localises to the cytoplasmic vesicle membrane. The catalysed reaction is [(1-&gt;4)-N-acetyl-beta-D-glucosaminyl](n) + UDP-N-acetyl-alpha-D-glucosamine = [(1-&gt;4)-N-acetyl-beta-D-glucosaminyl](n+1) + UDP + H(+). Its function is as follows. Polymerizes chitin, a structural polymer of the cell wall and septum, by transferring the sugar moiety of UDP-GlcNAc to the non-reducing end of the growing chitin polymer. In Mycosarcoma maydis (Corn smut fungus), this protein is Chitin synthase 3.